Here is a 62-residue protein sequence, read N- to C-terminus: UPF0434 protein Avi_4243 (62 aa).

It belongs to the UPF0434 family.

The protein is UPF0434 protein Avi_4243 of Allorhizobium ampelinum (strain ATCC BAA-846 / DSM 112012 / S4) (Agrobacterium vitis (strain S4)).